Reading from the N-terminus, the 269-residue chain is Putative pyruvate, phosphate dikinase regulatory protein (269 aa).

147–154 is a binding site for ADP; the sequence is GLSRTSKT.

Belongs to the pyruvate, phosphate/water dikinase regulatory protein family. PDRP subfamily.

The catalysed reaction is N(tele)-phospho-L-histidyl/L-threonyl-[pyruvate, phosphate dikinase] + ADP = N(tele)-phospho-L-histidyl/O-phospho-L-threonyl-[pyruvate, phosphate dikinase] + AMP + H(+). The enzyme catalyses N(tele)-phospho-L-histidyl/O-phospho-L-threonyl-[pyruvate, phosphate dikinase] + phosphate + H(+) = N(tele)-phospho-L-histidyl/L-threonyl-[pyruvate, phosphate dikinase] + diphosphate. Its function is as follows. Bifunctional serine/threonine kinase and phosphorylase involved in the regulation of the pyruvate, phosphate dikinase (PPDK) by catalyzing its phosphorylation/dephosphorylation. In Clostridium botulinum (strain 657 / Type Ba4), this protein is Putative pyruvate, phosphate dikinase regulatory protein.